The following is a 574-amino-acid chain: Craniofacial development protein 2 (574 aa).

5 stretches are compositionally biased toward basic and acidic residues: residues 1–16 (MEEVDSKDISSSKAED), 23–37 (ECHEEAVDELMKEDE), 45–55 (EQTKGIKRKAE), 86–111 (SEKEDAATEQEKGVESEDARKKKEDE), and 134–172 (TGEETEETRSGEEQEKPKEMQEVKLTKSLVEEVRCDRQQ). Disordered stretches follow at residues 1 to 222 (MEEV…PAVD) and 488 to 574 (TRPF…SGVF). Residues 199 to 208 (KTGTNASSKN) are compositionally biased toward polar residues. The segment at 493–572 (GTNEADDTSE…AVPSLPAGSG (80 aa)) is hydrophilic. Positions 502-516 (EESKPSSEQKGKEKP) are enriched in basic and acidic residues. Over residues 518–528 (ASVPSAVSSVP) the composition is skewed to low complexity.

Its subcellular location is the cytoplasm. The protein resides in the nucleus. This chain is Craniofacial development protein 2 (CFDP2), found in Tragulus javanicus (Lesser Malay chevrotain).